Here is a 201-residue protein sequence, read N- to C-terminus: 3-isopropylmalate dehydratase small subunit (201 aa).

It belongs to the LeuD family. LeuD type 1 subfamily. In terms of assembly, heterodimer of LeuC and LeuD.

It carries out the reaction (2R,3S)-3-isopropylmalate = (2S)-2-isopropylmalate. The protein operates within amino-acid biosynthesis; L-leucine biosynthesis; L-leucine from 3-methyl-2-oxobutanoate: step 2/4. In terms of biological role, catalyzes the isomerization between 2-isopropylmalate and 3-isopropylmalate, via the formation of 2-isopropylmaleate. This Buchnera aphidicola subsp. Baizongia pistaciae (strain Bp) protein is 3-isopropylmalate dehydratase small subunit.